The chain runs to 474 residues: tRNA-2-methylthio-N(6)-dimethylallyladenosine synthase (474 aa).

The MTTase N-terminal domain occupies 3 to 120; that stretch reads KKLHIKTWGC…LPEMINSVRG (118 aa). The [4Fe-4S] cluster site is built by Cys12, Cys49, Cys83, Cys157, Cys161, and Cys164. The 233-residue stretch at 143–375 folds into the Radical SAM core domain; it reads RAEGPTAFVS…QERINQQAMA (233 aa). In terms of domain architecture, TRAM spans 378-441; sequence RRMLGTTQRI…PNSLRGKVVR (64 aa).

It belongs to the methylthiotransferase family. MiaB subfamily. In terms of assembly, monomer. Requires [4Fe-4S] cluster as cofactor.

The protein localises to the cytoplasm. The enzyme catalyses N(6)-dimethylallyladenosine(37) in tRNA + (sulfur carrier)-SH + AH2 + 2 S-adenosyl-L-methionine = 2-methylsulfanyl-N(6)-dimethylallyladenosine(37) in tRNA + (sulfur carrier)-H + 5'-deoxyadenosine + L-methionine + A + S-adenosyl-L-homocysteine + 2 H(+). In terms of biological role, catalyzes the methylthiolation of N6-(dimethylallyl)adenosine (i(6)A), leading to the formation of 2-methylthio-N6-(dimethylallyl)adenosine (ms(2)i(6)A) at position 37 in tRNAs that read codons beginning with uridine. In Escherichia coli O81 (strain ED1a), this protein is tRNA-2-methylthio-N(6)-dimethylallyladenosine synthase.